The sequence spans 148 residues: Snaclec alboaggregin-D subunit beta (148 aa).

The signal sequence occupies residues 1 to 23 (MGRFISVSFGLLVVFLSLSGAGA). Residues Cys27 and Cys38 are joined by a disulfide bond. Positions 34-145 (YDLYCYKVFK…CNSTYSFVCK (112 aa)) constitute a C-type lectin domain. Asn47 carries an N-linked (GlcNAc...) asparagine glycan. Intrachain disulfides connect Cys55/Cys144 and Cys121/Cys136. A glycan (N-linked (GlcNAc...) asparagine) is linked at Asn137.

In terms of assembly, tetramer of heterodimers of alpha and beta subunits (alphabeta)(4); disulfide-linked. As to expression, expressed by the venom gland.

It is found in the secreted. Functionally, snaclec that induces human platelet aggregation in the absence of any cofactor with the EC(50) of 0.25 nM and causes tyrosine phosphorylation in human platelets. Antibodies against either platelet GPIbalpha (GP1BA) or GPVI (GP6) inhibit alboaggregin D-induced platelet aggregation. Only the combination of these two antibodies completely inhibit aggregation, suggesting that it acts through both GPIbalpha (GP1BA) and GPVI (GP6). The chain is Snaclec alboaggregin-D subunit beta from Trimeresurus albolabris (White-lipped pit viper).